We begin with the raw amino-acid sequence, 358 residues long: Probable ABC transporter periplasmic-binding protein y4fP (358 aa).

Positions 1–46 are cleaved as a signal peptide; the sequence is MRNVIKLTWSRRKRSASLDKGENIMKLAFAFATAAIVVAAAFPALA.

Belongs to the bacterial solute-binding protein 1 family.

It is found in the periplasm. Its function is as follows. Probably part of the binding-protein-dependent transport system y4fNOP. This chain is Probable ABC transporter periplasmic-binding protein y4fP, found in Sinorhizobium fredii (strain NBRC 101917 / NGR234).